The primary structure comprises 139 residues: Putative nickel-responsive regulator (139 aa).

Ni(2+) contacts are provided by His-79, His-90, His-92, and Cys-98.

This sequence belongs to the transcriptional regulatory CopG/NikR family. The cofactor is Ni(2+).

Its function is as follows. Transcriptional regulator. In Anaeromyxobacter dehalogenans (strain 2CP-C), this protein is Putative nickel-responsive regulator.